A 484-amino-acid chain; its full sequence is Cysteine--tRNA ligase (484 aa).

Cysteine 29 serves as a coordination point for Zn(2+). The 'HIGH' region signature appears at 31 to 41; that stretch reads PTVQSAPHIGH. Positions 219, 244, and 248 each coordinate Zn(2+). The short motif at 275-279 is the 'KMSKS' region element; it reads KMSKS. ATP is bound at residue lysine 278.

It belongs to the class-I aminoacyl-tRNA synthetase family. As to quaternary structure, monomer. Requires Zn(2+) as cofactor.

It localises to the cytoplasm. The enzyme catalyses tRNA(Cys) + L-cysteine + ATP = L-cysteinyl-tRNA(Cys) + AMP + diphosphate. The protein is Cysteine--tRNA ligase of Clavibacter sepedonicus (Clavibacter michiganensis subsp. sepedonicus).